The sequence spans 339 residues: Ketol-acid reductoisomerase (NADP(+)) (339 aa).

The KARI N-terminal Rossmann domain occupies 1–182; that stretch reads MRVYYDRDAD…GGGRAGIIET (182 aa). NADP(+) contacts are provided by residues 24 to 27, R48, S51, T53, and 83 to 86; these read YGSQ and DELQ. Residue H108 is part of the active site. Residue G134 participates in NADP(+) binding. In terms of domain architecture, KARI C-terminal knotted spans 183 to 328; sequence TFKEECETDL…AKLRGMMPWI (146 aa). Mg(2+)-binding residues include D191, E195, E227, and E231. Residue S252 coordinates substrate.

It belongs to the ketol-acid reductoisomerase family. It depends on Mg(2+) as a cofactor.

The catalysed reaction is (2R)-2,3-dihydroxy-3-methylbutanoate + NADP(+) = (2S)-2-acetolactate + NADPH + H(+). It carries out the reaction (2R,3R)-2,3-dihydroxy-3-methylpentanoate + NADP(+) = (S)-2-ethyl-2-hydroxy-3-oxobutanoate + NADPH + H(+). It participates in amino-acid biosynthesis; L-isoleucine biosynthesis; L-isoleucine from 2-oxobutanoate: step 2/4. It functions in the pathway amino-acid biosynthesis; L-valine biosynthesis; L-valine from pyruvate: step 2/4. Involved in the biosynthesis of branched-chain amino acids (BCAA). Catalyzes an alkyl-migration followed by a ketol-acid reduction of (S)-2-acetolactate (S2AL) to yield (R)-2,3-dihydroxy-isovalerate. In the isomerase reaction, S2AL is rearranged via a Mg-dependent methyl migration to produce 3-hydroxy-3-methyl-2-ketobutyrate (HMKB). In the reductase reaction, this 2-ketoacid undergoes a metal-dependent reduction by NADPH to yield (R)-2,3-dihydroxy-isovalerate. The protein is Ketol-acid reductoisomerase (NADP(+)) of Methylobacterium radiotolerans (strain ATCC 27329 / DSM 1819 / JCM 2831 / NBRC 15690 / NCIMB 10815 / 0-1).